The primary structure comprises 498 residues: PE-PGRS family protein PE_PGRS33 (498 aa).

Residues 1–30 (MSFVVTIPEALAAVATDLAGIGSTIGTANA) form an essential for translocation to the cell surface region. Residues 1 to 93 (MSFVVTIPEA…AGSYAAAEAA (93 aa)) enclose the PE domain. An interacts with TLR2 region spans residues 140–260 (GNGGAGGSGA…GLFFGVGGAG (121 aa)).

This sequence belongs to the mycobacterial PE family. PGRS subfamily. As to quaternary structure, interacts with human TLR2.

The protein resides in the secreted. It localises to the cell wall. Its subcellular location is the cell surface. The protein localises to the cell outer membrane. Binding of Ca(2+) to PE_PGRS33 induces conformational changes and increases affinity for TLR2. In terms of biological role, induces TNF-alpha release through human Toll-like receptor 2 (TLR2) signaling pathway, leading to macrophage apoptosis. The signaling pathway involves TLR2-dependent activation of the mitogen-activated protein kinase kinase kinase 5 (ASK1), which activates the p38 and JNK MAPKs, leading to enhanced expression of TNF-alpha and tumor necrosis factor receptor superfamily member 1A (TNFRI) genes. Signals are amplified through classical caspase 8-dependent mitochondrial release of cytochrome c, leading to the activation of caspases 9 and 3. Mediates Ca(2+)-dependent up-regulation of the anti-inflammatory cytokine IL-10. Mediates entry into macrophages in a TLR2-dependent mechanism and activates the TLR2-dependent pro-adhesive pathway. The sequence is that of PE-PGRS family protein PE_PGRS33 from Mycobacterium tuberculosis (strain ATCC 25618 / H37Rv).